The primary structure comprises 600 residues: UvrABC system protein C (600 aa).

Positions 15–100 (NSAGVYQYFN…IKQLHPKYNI (86 aa)) constitute a GIY-YIG domain. Positions 203-238 (SILIKNLEKQMLVLAQNENYEEAAKVRDQIVTIKDL) constitute a UVR domain.

It belongs to the UvrC family. Interacts with UvrB in an incision complex.

The protein localises to the cytoplasm. Its function is as follows. The UvrABC repair system catalyzes the recognition and processing of DNA lesions. UvrC both incises the 5' and 3' sides of the lesion. The N-terminal half is responsible for the 3' incision and the C-terminal half is responsible for the 5' incision. The protein is UvrABC system protein C of Campylobacter jejuni subsp. jejuni serotype O:6 (strain 81116 / NCTC 11828).